The sequence spans 529 residues: uncharacterized protein (529 aa).

The segment at 1–20 (MGADLKQPQDADSPPKGVSR) is disordered. Residues 1 to 52 (MGADLKQPQDADSPPKGVSRRRFLTTGAAAVVGTGVGAGGTALLSSHPRGPA) constitute a signal peptide (tat-type signal).

Predicted to be exported by the Tat system. The position of the signal peptide cleavage has not been experimentally proven.

This is an uncharacterized protein from Mycobacterium tuberculosis (strain CDC 1551 / Oshkosh).